Reading from the N-terminus, the 349-residue chain is Bifunctional protein FolKE (349 aa).

A 2-amino-4-hydroxy-6-hydroxymethyldihydropteridine pyrophosphokinase region spans residues 1-226 (MQTTYLSMGS…LFEIDSSKND (226 aa)). A GTP cyclohydrolase 1 region spans residues 226–349 (DSIVLIKDIP…KRMEFLESLL (124 aa)).

In the N-terminal section; belongs to the HPPK family. The protein in the C-terminal section; belongs to the GTP cyclohydrolase I family. In terms of assembly, homomer.

It carries out the reaction 6-hydroxymethyl-7,8-dihydropterin + ATP = (7,8-dihydropterin-6-yl)methyl diphosphate + AMP + H(+). It catalyses the reaction GTP + H2O = 7,8-dihydroneopterin 3'-triphosphate + formate + H(+). The protein operates within cofactor biosynthesis; 7,8-dihydroneopterin triphosphate biosynthesis; 7,8-dihydroneopterin triphosphate from GTP: step 1/1. It participates in cofactor biosynthesis; tetrahydrofolate biosynthesis; 2-amino-4-hydroxy-6-hydroxymethyl-7,8-dihydropteridine diphosphate from 7,8-dihydroneopterin triphosphate: step 4/4. The chain is Bifunctional protein FolKE (folKE) from Lactococcus lactis subsp. cremoris (strain MG1363).